Reading from the N-terminus, the 1196-residue chain is Sorbin and SH3 domain-containing protein 2 (1196 aa).

Disordered stretches follow at residues 25–57 and 75–95; these read VQSS…ETLN and PNLQ…GNSG. A phosphoserine mark is found at S27, S28, and S40. The segment covering 83–92 has biased composition (polar residues); that stretch reads PTQSHITING. Phosphoserine occurs at positions 130 and 143. M148 is modified (alanine amide). One can recognise a SoHo domain in the interval 166–227; it reads VIKAPHYPGI…YNTPYTYNAG (62 aa). Residues 235–247 are compositionally biased toward polar residues; it reads AQSHPAAKTQTYR. 2 disordered regions span residues 235 to 314 and 329 to 407; these read AQSH…EPGK and SSID…GDDS. Basic and acidic residues-rich tracts occupy residues 252–262 and 276–312; these read SHSDNGTDAFK and RPRD…EYEP. A Phosphoserine modification is found at S254. The segment covering 329–343 has biased composition (polar residues); sequence SSIDRSLERPSSSAS. Phosphoserine is present on residues S334, S340, S343, and S354. The residue at position 372 (T372) is a Phosphothreonine. Position 382 is a phosphoserine (S382). A compositionally biased stretch (low complexity) spans 382 to 399; the sequence is SSSTFTTSFISSSPSSPS. Phosphothreonine is present on T387. S392, S393, S394, S396, S397, S399, S478, S589, S592, S645, S648, S844, and S938 each carry phosphoserine. Residues 929 to 958 form a disordered region; that stretch reads QDHESPRSYSSTLTDLGRSVSRERRGTPEK. Over residues 948 to 958 the composition is skewed to basic and acidic residues; the sequence is VSRERRGTPEK. SH3 domains are found at residues 959–1018 and 1034–1095; these read EVKL…KLTP and GEIG…VVKR. 2 positions are modified to phosphoserine: S1113 and S1119. An SH3 3 domain is found at 1137–1196; the sequence is GGGEPFQALYNYTPRNEDELELRESDVVDVMEKCDDGWFVGTSRRTKFFGTFPGNYVKRL.

As to quaternary structure, interacts with ABL1/c-Abl, ABL2/v-Abl/Arg, ACTN, CBL and PALLD. Interacts with ABL, CBL, DNM1, DNM2, FLOT1, AFDN, PTK2B/PYK2, SAPAP, SPTAN1, SYNJ1, SYNJ2, VCL/vinculin and WASF. Interacts with PTPN12 and WASF1 via its SH3 domains; this interaction may mediate the partial PTPN12 and WASF1 translocation to focal adhesion sites. Ubiquitinated by CBL. In terms of tissue distribution, expressed in brain; found in synapses in cerebellum.

Its subcellular location is the cytoplasm. It localises to the perinuclear region. It is found in the apical cell membrane. The protein resides in the cell junction. The protein localises to the focal adhesion. Its subcellular location is the cell projection. It localises to the lamellipodium. In terms of biological role, adapter protein that plays a role in the assembling of signaling complexes, being a link between ABL kinases and actin cytoskeleton. Can form complex with ABL1 and CBL, thus promoting ubiquitination and degradation of ABL1. May play a role in the regulation of pancreatic cell adhesion, possibly by acting on WASF1 phosphorylation, enhancing phosphorylation by ABL1, as well as dephosphorylation by PTPN12. Isoform 2 increases water and sodium absorption in the intestine and gall-bladder. The protein is Sorbin and SH3 domain-containing protein 2 (Sorbs2) of Rattus norvegicus (Rat).